Reading from the N-terminus, the 368-residue chain is Isopentenyl-diphosphate delta-isomerase (368 aa).

7-8 (RK) contributes to the substrate binding site. FMN is bound by residues T65, 66 to 68 (GMT), S96, and N125. 96 to 98 (SQR) is a binding site for substrate. Q160 serves as a coordination point for substrate. E161 is a binding site for Mg(2+). Residues K193, S218, T223, 275-277 (GIR), and 296-297 (AL) contribute to the FMN site.

Belongs to the IPP isomerase type 2 family. In terms of assembly, homooctamer. Dimer of tetramers. FMN is required as a cofactor. Requires NADPH as cofactor. Mg(2+) serves as cofactor.

Its subcellular location is the cytoplasm. It catalyses the reaction isopentenyl diphosphate = dimethylallyl diphosphate. Involved in the biosynthesis of isoprenoids. Catalyzes the 1,3-allylic rearrangement of the homoallylic substrate isopentenyl (IPP) to its allylic isomer, dimethylallyl diphosphate (DMAPP). The sequence is that of Isopentenyl-diphosphate delta-isomerase from Saccharolobus islandicus (strain M.16.27) (Sulfolobus islandicus).